Consider the following 130-residue polypeptide: Ribosome-binding factor A (130 aa).

The protein belongs to the RbfA family. In terms of assembly, monomer. Binds 30S ribosomal subunits, but not 50S ribosomal subunits or 70S ribosomes.

Its subcellular location is the cytoplasm. In terms of biological role, one of several proteins that assist in the late maturation steps of the functional core of the 30S ribosomal subunit. Associates with free 30S ribosomal subunits (but not with 30S subunits that are part of 70S ribosomes or polysomes). Required for efficient processing of 16S rRNA. May interact with the 5'-terminal helix region of 16S rRNA. The chain is Ribosome-binding factor A from Roseiflexus castenholzii (strain DSM 13941 / HLO8).